Here is a 365-residue protein sequence, read N- to C-terminus: Phospho-N-acetylmuramoyl-pentapeptide-transferase (365 aa).

9 helical membrane passes run Leu47–Leu67, Pro92–Gly112, Ser114–Asp134, Leu153–Trp173, Ile180–Phe200, Leu215–Ala235, Pro239–Asn259, Ala281–Leu301, and Thr344–Leu364.

This sequence belongs to the glycosyltransferase 4 family. MraY subfamily. It depends on Mg(2+) as a cofactor.

Its subcellular location is the cell inner membrane. It carries out the reaction UDP-N-acetyl-alpha-D-muramoyl-L-alanyl-gamma-D-glutamyl-meso-2,6-diaminopimeloyl-D-alanyl-D-alanine + di-trans,octa-cis-undecaprenyl phosphate = di-trans,octa-cis-undecaprenyl diphospho-N-acetyl-alpha-D-muramoyl-L-alanyl-D-glutamyl-meso-2,6-diaminopimeloyl-D-alanyl-D-alanine + UMP. It participates in cell wall biogenesis; peptidoglycan biosynthesis. Functionally, catalyzes the initial step of the lipid cycle reactions in the biosynthesis of the cell wall peptidoglycan: transfers peptidoglycan precursor phospho-MurNAc-pentapeptide from UDP-MurNAc-pentapeptide onto the lipid carrier undecaprenyl phosphate, yielding undecaprenyl-pyrophosphoryl-MurNAc-pentapeptide, known as lipid I. The polypeptide is Phospho-N-acetylmuramoyl-pentapeptide-transferase (Synechococcus elongatus (strain ATCC 33912 / PCC 7942 / FACHB-805) (Anacystis nidulans R2)).